The following is a 327-amino-acid chain: GMP reductase (327 aa).

Catalysis depends on Cys176, which acts as the Thioimidate intermediate. Ile205–Val228 is a binding site for NADP(+).

This sequence belongs to the IMPDH/GMPR family. GuaC type 2 subfamily.

It catalyses the reaction IMP + NH4(+) + NADP(+) = GMP + NADPH + 2 H(+). Functionally, catalyzes the irreversible NADPH-dependent deamination of GMP to IMP. It functions in the conversion of nucleobase, nucleoside and nucleotide derivatives of G to A nucleotides, and in maintaining the intracellular balance of A and G nucleotides. The sequence is that of GMP reductase from Streptococcus equi subsp. zooepidemicus (strain H70).